The primary structure comprises 341 residues: GDT1-like protein 1, chloroplastic (341 aa).

The span at 1–13 (MASVASSTVFASS) shows a compositional bias: low complexity. Disordered regions lie at residues 1-41 (MASV…GRSV) and 54-76 (VVTRASDEEGPPEPAGQGRGGGR). Residues 1 to 57 (MASVASSTVFASSLPHHRATTRAPPTPPRIPRRARLPGRSVVSCLPKRGSEKLVVTR) constitute a chloroplast transit peptide. A run of 7 helical transmembrane segments spans residues 79-99 (PSLDASSCGLALAAAAGVLML), 117-137 (VVGDLGDISTGFASAFLLIFF), 158-178 (AIIFLGTFGALAVMTIISVVL), 203-223 (FLAACLLVYYGVTTLLDAASG), 246-266 (GAGIISAASTIASTFVLVFIA), 286-306 (LGVIAGSLAGHAVATLIAVLG), and 318-338 (IVAYIGGSLFLAFAAVTLVEI).

It belongs to the GDT1 family.

The protein resides in the plastid. It localises to the chloroplast membrane. In Oryza sativa subsp. indica (Rice), this protein is GDT1-like protein 1, chloroplastic.